Here is a 477-residue protein sequence, read N- to C-terminus: Ankyrin repeat, SAM and basic leucine zipper domain-containing protein 1 (477 aa).

3 positions are modified to phosphoserine: serine 17, serine 18, and serine 20. 6 ANK repeats span residues 46-76, 80-109, 112-146, 150-179, 183-212, and 216-245; these read EKKEKFKKALTTGDVSLVLELLDSGIISVDA, YGWTPLMYAASVANAELVRVLLDRGANASF, DKQTILITACSAHGSEEQILKCVELLLSRNADPNV, RLMTPIMYAARDGHTQVVALLVASGAEVNT, NGYTALTWAARQGHKSIVLKLLELGANKML, and DGKLPSEIAKRNKHHEIFNLLTFTLNPLEG. The 63-residue stretch at 274–336 folds into the SAM domain; sequence SYAAFGDLEV…KILAALKELE (63 aa).

In terms of assembly, interacts with DDX4, PIWIL1, RANBP9 and TDRD1.

It is found in the cytoplasm. Its function is as follows. Plays a central role during spermatogenesis by repressing transposable elements and preventing their mobilization, which is essential for the germline integrity. Acts via the piRNA metabolic process, which mediates the repression of transposable elements during meiosis by forming complexes composed of piRNAs and Piwi proteins and governs the methylation and subsequent repression of transposons. Its association with pi-bodies suggests a participation in the primary piRNAs metabolic process. Required prior to the pachytene stage to facilitate the production of multiple types of piRNAs, including those associated with repeats involved in the regulation of retrotransposons. May act by mediating protein-protein interactions during germ cell maturation. The sequence is that of Ankyrin repeat, SAM and basic leucine zipper domain-containing protein 1 (ASZ1) from Callithrix jacchus (White-tufted-ear marmoset).